A 165-amino-acid polypeptide reads, in one-letter code: Xanthine-guanine phosphoribosyltransferase (165 aa).

Residues 41–42 (RG) and 98–106 (DDLTDTGKT) each bind 5-phospho-alpha-D-ribose 1-diphosphate. Asp-99 lines the Mg(2+) pocket. The guanine site is built by Asp-102 and Ile-145. 2 residues coordinate xanthine: Asp-102 and Ile-145. GMP-binding positions include 102–106 (DTGKT) and 144–145 (WI).

The protein belongs to the purine/pyrimidine phosphoribosyltransferase family. XGPT subfamily. Homotetramer. Requires Mg(2+) as cofactor.

Its subcellular location is the cell inner membrane. The catalysed reaction is GMP + diphosphate = guanine + 5-phospho-alpha-D-ribose 1-diphosphate. It carries out the reaction XMP + diphosphate = xanthine + 5-phospho-alpha-D-ribose 1-diphosphate. The enzyme catalyses IMP + diphosphate = hypoxanthine + 5-phospho-alpha-D-ribose 1-diphosphate. Its pathway is purine metabolism; GMP biosynthesis via salvage pathway; GMP from guanine: step 1/1. It functions in the pathway purine metabolism; XMP biosynthesis via salvage pathway; XMP from xanthine: step 1/1. Functionally, purine salvage pathway enzyme that catalyzes the transfer of the ribosyl-5-phosphate group from 5-phospho-alpha-D-ribose 1-diphosphate (PRPP) to the N9 position of the 6-oxopurines guanine and xanthine to form the corresponding ribonucleotides GMP (guanosine 5'-monophosphate) and XMP (xanthosine 5'-monophosphate), with the release of PPi. To a lesser extent, also acts on hypoxanthine. The chain is Xanthine-guanine phosphoribosyltransferase from Brucella suis (strain ATCC 23445 / NCTC 10510).